We begin with the raw amino-acid sequence, 425 residues long: NAC transcription factor ONAC010 (425 aa).

A compositionally biased stretch (polar residues) spans 1-10 (MESPDSSSGS). Residues 1 to 34 (MESPDSSSGSAPPRVLRRQQQQPGSAPELPPGFR) form a disordered region. Positions 12–23 (PPRVLRRQQQQP) are enriched in low complexity. In terms of domain architecture, NAC spans 29–200 (LPPGFRFHPT…DWVLCRIYKK (172 aa)). A DNA-binding region spans residues 129–206 (VGVKKALVFY…IYKKTNKAGA (78 aa)).

It localises to the nucleus. Functionally, transcription factor of the NAC family associated with male fertility. In Oryza sativa subsp. indica (Rice), this protein is NAC transcription factor ONAC010 (ONAC010).